The chain runs to 216 residues: Peroxiredoxin (216 aa).

The Thioredoxin domain occupies 2-158; it reads IVIGEKFPEV…ILRLVKALKI (157 aa). Catalysis depends on C46, which acts as the Cysteine sulfenic acid (-SOH) intermediate. R121 is a substrate binding site. A disulfide bond links C205 and C211.

It belongs to the peroxiredoxin family. Prx6 subfamily. As to quaternary structure, homodecamer. Pentamer of dimers that assemble into a ring structure.

It is found in the cytoplasm. The enzyme catalyses a hydroperoxide + [thioredoxin]-dithiol = an alcohol + [thioredoxin]-disulfide + H2O. Its function is as follows. Thiol-specific peroxidase that catalyzes the reduction of hydrogen peroxide and organic hydroperoxides to water and alcohols, respectively. Plays a role in cell protection against oxidative stress by detoxifying peroxides. The sequence is that of Peroxiredoxin from Pyrococcus furiosus (strain ATCC 43587 / DSM 3638 / JCM 8422 / Vc1).